The following is an 83-amino-acid chain: Gas vesicle protein G1 (83 aa).

It belongs to the gas vesicle GvpG family. GvpF to GvpM interact with each other in vitro, and may form multi-subunit complex(es). Might interact with GvpA1.

It is found in the gas vesicle. Proteins GvpF to GvpM might be involved in nucleating gas vesicle formation. A minor component of the gas vesicle. Gas vesicles are hollow, gas filled proteinaceous nanostructures found in several microbial planktonic microorganisms. They allow positioning of halobacteria at the optimal depth for growth in the poorly aerated, shallow brine pools of their habitat. Its function is as follows. Expression of a 9.5 kb p-vac DNA fragment containing 2 divergently transcribed regions (gvpD-gvpE-gvpF-gvpG-gvpH-gvpI-gvpJ-gvpK-gvpL-gvpM and gvpA-gvpC-gvpN-gvpO) allows H.volcanii to produce gas vesicles. A minimal gas vesicle can be made in H.volcanii by gvpA1-gvpO1 plus gvpF1-gvpG1-gvpJ1-gvpK1-gvpL1-gvpM1; lack of enough GvpJ1 prevents formation. A similar region restores gas vesicle production in H.halobium without the p-vac locus, but it still has the c-vac locus. The protein is Gas vesicle protein G1 (gvpG11) of Halobacterium salinarum (strain ATCC 700922 / JCM 11081 / NRC-1) (Halobacterium halobium).